The sequence spans 507 residues: Hexokinase-5 (507 aa).

A helical membrane pass occupies residues 4–24 (AAAVGTAVVVAAAVGVAVVLA). Positions 44–498 (RKVAAVIEDV…SGIGAALLAA (455 aa)) constitute a Hexokinase domain. The tract at residues 99 to 237 (TGNEQGLFYA…GLDMKIAALV (139 aa)) is hexokinase small subdomain. 3 residues coordinate ADP: Gly113, Thr114, and Asn115. The D-glucose site is built by Thr203, Lys204, Asn238, and Asp239. A hexokinase large subdomain region spans residues 238–487 (NDTVGTLAGG…SSVVTKLAND (250 aa)). Thr262 lines the ADP pocket. Residues Asn265, Glu293, and Glu324 each coordinate D-glucose. Residue Gly452 coordinates ADP.

It belongs to the hexokinase family. Expressed in roots, leaves, flowers, immature seeds, endosperm and seed coat.

It localises to the plastid. It is found in the chloroplast outer membrane. It catalyses the reaction a D-hexose + ATP = a D-hexose 6-phosphate + ADP + H(+). The catalysed reaction is D-fructose + ATP = D-fructose 6-phosphate + ADP + H(+). It carries out the reaction D-glucose + ATP = D-glucose 6-phosphate + ADP + H(+). It functions in the pathway carbohydrate metabolism; hexose metabolism. The protein operates within carbohydrate degradation; glycolysis; D-glyceraldehyde 3-phosphate and glycerone phosphate from D-glucose: step 1/4. Its function is as follows. Fructose and glucose phosphorylating enzyme. Functions as a glucose sensor for plant growth and photosynthesis. Is essential for pollen development, germination, and tube growth. Its activity is necessary for the starch utilization pathway during pollen germination and tube growth, as well as for starch biosynthesis during pollen maturation. This is Hexokinase-5 (HXK5) from Oryza sativa subsp. japonica (Rice).